Consider the following 156-residue polypeptide: ATP synthase subunit b (156 aa).

A helical membrane pass occupies residues 7–27 (LFAQMVVFLILAWFTMKFVWP).

The protein belongs to the ATPase B chain family. F-type ATPases have 2 components, F(1) - the catalytic core - and F(0) - the membrane proton channel. F(1) has five subunits: alpha(3), beta(3), gamma(1), delta(1), epsilon(1). F(0) has three main subunits: a(1), b(2) and c(10-14). The alpha and beta chains form an alternating ring which encloses part of the gamma chain. F(1) is attached to F(0) by a central stalk formed by the gamma and epsilon chains, while a peripheral stalk is formed by the delta and b chains.

It is found in the cell inner membrane. F(1)F(0) ATP synthase produces ATP from ADP in the presence of a proton or sodium gradient. F-type ATPases consist of two structural domains, F(1) containing the extramembraneous catalytic core and F(0) containing the membrane proton channel, linked together by a central stalk and a peripheral stalk. During catalysis, ATP synthesis in the catalytic domain of F(1) is coupled via a rotary mechanism of the central stalk subunits to proton translocation. In terms of biological role, component of the F(0) channel, it forms part of the peripheral stalk, linking F(1) to F(0). The protein is ATP synthase subunit b of Paraburkholderia xenovorans (strain LB400).